The sequence spans 228 residues: Orotidine 5'-phosphate decarboxylase (228 aa).

Residues D11, K33, 60 to 69 (DLKLHDIPNT), T117, R178, Q186, G206, and R207 each bind substrate. K62 (proton donor) is an active-site residue.

This sequence belongs to the OMP decarboxylase family. Type 1 subfamily. In terms of assembly, homodimer.

It catalyses the reaction orotidine 5'-phosphate + H(+) = UMP + CO2. It participates in pyrimidine metabolism; UMP biosynthesis via de novo pathway; UMP from orotate: step 2/2. Functionally, catalyzes the decarboxylation of orotidine 5'-monophosphate (OMP) to uridine 5'-monophosphate (UMP). The sequence is that of Orotidine 5'-phosphate decarboxylase from Ehrlichia canis (strain Jake).